The following is a 236-amino-acid chain: uncharacterized protein (236 aa).

The signal sequence occupies residues 1-24; the sequence is MRKKHFNMILKLALISSLLALAAS. N-linked (GlcNAc...) asparagine glycans are attached at residues Asn-59, Asn-171, and Asn-197.

It is found in the secreted. This is an uncharacterized protein from Caenorhabditis elegans.